The primary structure comprises 72 residues: Translation initiation factor IF-1 (72 aa).

The S1-like domain maps to 1–72 (MSKEDSFEME…SKGRITYRAR (72 aa)).

The protein belongs to the IF-1 family. Component of the 30S ribosomal translation pre-initiation complex which assembles on the 30S ribosome in the order IF-2 and IF-3, IF-1 and N-formylmethionyl-tRNA(fMet); mRNA recruitment can occur at any time during PIC assembly.

Its subcellular location is the cytoplasm. Functionally, one of the essential components for the initiation of protein synthesis. Stabilizes the binding of IF-2 and IF-3 on the 30S subunit to which N-formylmethionyl-tRNA(fMet) subsequently binds. Helps modulate mRNA selection, yielding the 30S pre-initiation complex (PIC). Upon addition of the 50S ribosomal subunit IF-1, IF-2 and IF-3 are released leaving the mature 70S translation initiation complex. This Pseudomonas savastanoi pv. phaseolicola (strain 1448A / Race 6) (Pseudomonas syringae pv. phaseolicola (strain 1448A / Race 6)) protein is Translation initiation factor IF-1.